Consider the following 175-residue polypeptide: MPKFLDAVAGFGVTFGSMFKKPVTEEYPEKPGPVAKRYHGRHQLNRYADGLEKCIGCELCAWACPADAIFVEGADNTEAERYSPGERYGRVYQINYLRCIGCGLCIEACPTRALTMTNDYEMADDNRADLIYGKDKLLAPLEPGMGAPPHAMAPGATDEDYYRGTVSPSAEADAR.

2 4Fe-4S ferredoxin-type domains span residues 44 to 74 (LNRY…VEGA) and 90 to 119 (RVYQ…MTND). [4Fe-4S] cluster contacts are provided by C54, C57, C60, C64, C99, C102, C105, and C109. Residues 148–175 (PPHAMAPGATDEDYYRGTVSPSAEADAR) are disordered.

Belongs to the complex I 23 kDa subunit family. In terms of assembly, NDH-1 is composed of 14 different subunits. Subunits NuoA, H, J, K, L, M, N constitute the membrane sector of the complex. The cofactor is [4Fe-4S] cluster.

The protein resides in the cell membrane. It carries out the reaction a quinone + NADH + 5 H(+)(in) = a quinol + NAD(+) + 4 H(+)(out). In terms of biological role, NDH-1 shuttles electrons from NADH, via FMN and iron-sulfur (Fe-S) centers, to quinones in the respiratory chain. The immediate electron acceptor for the enzyme in this species is believed to be menaquinone. Couples the redox reaction to proton translocation (for every two electrons transferred, four hydrogen ions are translocated across the cytoplasmic membrane), and thus conserves the redox energy in a proton gradient. The polypeptide is NADH-quinone oxidoreductase subunit I (Mycolicibacterium gilvum (strain PYR-GCK) (Mycobacterium gilvum (strain PYR-GCK))).